Here is a 598-residue protein sequence, read N- to C-terminus: uncharacterized protein (598 aa).

Residues 1–23 (MSHEGSRQARDRGVTRSKAEKAR) show a composition bias toward basic and acidic residues. Disordered stretches follow at residues 1-32 (MSHEGSRQARDRGVTRSKAEKARPPTQPVPQV), 151-190 (FHNEEPGNPDQFLLGSSWDKESQKPTQPSEPSAEPKVTPR), and 222-241 (PSKESLRSTAEGERVYSPQS). The span at 225 to 235 (ESLRSTAEGER) shows a compositional bias: basic and acidic residues. Phosphoserine is present on residues Ser238 and Ser242. 2 disordered regions span residues 366–396 (RRSQAGTATSACESQALSSRAPSKPHVSSPR) and 551–571 (AEEGTPQAPEQQPIQTGVSKP). Composition is skewed to polar residues over residues 369–386 (QAGTATSACESQALSSRA) and 558–569 (APEQQPIQTGVS).

This is an uncharacterized protein from Mus musculus (Mouse).